The sequence spans 423 residues: UBX domain-containing protein 1 (423 aa).

The segment at 44–167 (QTDDQKDRRE…EVTDPSDPNS (124 aa)) is disordered. Basic and acidic residues predominate over residues 46 to 66 (DDQKDRREEAHWNRQQEKALK). The segment covering 69–79 (AFSTNSSNKAI) has biased composition (polar residues). Residues 115-130 (SSRSGSGNNSRFMSFS) show a composition bias toward low complexity. Ser-128, Ser-210, and Ser-224 each carry phosphoserine. The 66-residue stretch at 232–297 (KVTREITFWK…VYKKLDESYK (66 aa)) folds into the SEP domain. Residue Lys-241 forms a Glycyl lysine isopeptide (Lys-Gly) (interchain with G-Cter in ubiquitin) linkage. The disordered stretch occupies residues 299–348 (PTRKLGGFSGQGQRLGSPIPGESSPAEVPKNETPAAQEQPMPDNEPKQGD). A phosphoserine mark is found at Ser-315, Ser-321, and Ser-322. Residue Thr-331 is modified to Phosphothreonine. One can recognise a UBX domain in the interval 344 to 421 (PKQGDTSIQI…DLLNSVVVQR (78 aa)).

In terms of assembly, forms a complex composed of CDC48, NPL4, UFD1, DOA1, SHP1 and deubiquitinase OTU1. Interacts with CDC48.

It is found in the nucleus. Its subcellular location is the cytoplasm. Functionally, involved in CDC48-dependent protein degradation through the ubiquitin/proteasome pathway. Direct or indirect positive regulator of GLC7 activity. The sequence is that of UBX domain-containing protein 1 (SHP1) from Saccharomyces cerevisiae (strain ATCC 204508 / S288c) (Baker's yeast).